We begin with the raw amino-acid sequence, 87 residues long: Small ribosomal subunit protein bS20 (87 aa).

The interval 1 to 22 (MANHKSALKRHKQSLKRAARNR) is disordered.

This sequence belongs to the bacterial ribosomal protein bS20 family.

Functionally, binds directly to 16S ribosomal RNA. This is Small ribosomal subunit protein bS20 from Nitratidesulfovibrio vulgaris (strain DP4) (Desulfovibrio vulgaris).